A 315-amino-acid polypeptide reads, in one-letter code: 4-hydroxy-3-methylbut-2-enyl diphosphate reductase (315 aa).

Cysteine 12 contacts [4Fe-4S] cluster. Residues histidine 41 and histidine 74 each coordinate (2E)-4-hydroxy-3-methylbut-2-enyl diphosphate. Residues histidine 41 and histidine 74 each contribute to the dimethylallyl diphosphate site. Isopentenyl diphosphate contacts are provided by histidine 41 and histidine 74. Cysteine 96 provides a ligand contact to [4Fe-4S] cluster. Residue histidine 124 participates in (2E)-4-hydroxy-3-methylbut-2-enyl diphosphate binding. Histidine 124 is a binding site for dimethylallyl diphosphate. An isopentenyl diphosphate-binding site is contributed by histidine 124. Glutamate 126 serves as the catalytic Proton donor. Threonine 168 contacts (2E)-4-hydroxy-3-methylbut-2-enyl diphosphate. Cysteine 198 provides a ligand contact to [4Fe-4S] cluster. Residues serine 226, serine 227, asparagine 228, and serine 270 each contribute to the (2E)-4-hydroxy-3-methylbut-2-enyl diphosphate site. Residues serine 226, serine 227, asparagine 228, and serine 270 each contribute to the dimethylallyl diphosphate site. Isopentenyl diphosphate contacts are provided by serine 226, serine 227, asparagine 228, and serine 270.

This sequence belongs to the IspH family. [4Fe-4S] cluster is required as a cofactor.

It catalyses the reaction isopentenyl diphosphate + 2 oxidized [2Fe-2S]-[ferredoxin] + H2O = (2E)-4-hydroxy-3-methylbut-2-enyl diphosphate + 2 reduced [2Fe-2S]-[ferredoxin] + 2 H(+). The catalysed reaction is dimethylallyl diphosphate + 2 oxidized [2Fe-2S]-[ferredoxin] + H2O = (2E)-4-hydroxy-3-methylbut-2-enyl diphosphate + 2 reduced [2Fe-2S]-[ferredoxin] + 2 H(+). Its pathway is isoprenoid biosynthesis; dimethylallyl diphosphate biosynthesis; dimethylallyl diphosphate from (2E)-4-hydroxy-3-methylbutenyl diphosphate: step 1/1. It functions in the pathway isoprenoid biosynthesis; isopentenyl diphosphate biosynthesis via DXP pathway; isopentenyl diphosphate from 1-deoxy-D-xylulose 5-phosphate: step 6/6. In terms of biological role, catalyzes the conversion of 1-hydroxy-2-methyl-2-(E)-butenyl 4-diphosphate (HMBPP) into a mixture of isopentenyl diphosphate (IPP) and dimethylallyl diphosphate (DMAPP). Acts in the terminal step of the DOXP/MEP pathway for isoprenoid precursor biosynthesis. The polypeptide is 4-hydroxy-3-methylbut-2-enyl diphosphate reductase (Pseudomonas savastanoi pv. phaseolicola (strain 1448A / Race 6) (Pseudomonas syringae pv. phaseolicola (strain 1448A / Race 6))).